The sequence spans 463 residues: Annexin A7 (463 aa).

Over residues 1-18 (MSYPGYPPTGYPPFPGYP) the composition is skewed to pro residues. Disordered stretches follow at residues 1-34 (MSYP…QYPY) and 77-149 (SPGG…MTQG). Residues 1 to 143 (MSYPGYPPTG…GGQAPYPSQP (143 aa)) form a repeat-rich region region. The 3 X 5 AA tandem repeats of G-Y-P-P-X stretch occupies residues 5 to 20 (GYPPTGYPPFPGYPPA). A compositionally biased stretch (gly residues) spans 86-99 (GGQGFGAPPGGAGF). Annexin repeat units lie at residues 160 to 231 (FDAM…ALFM), 232 to 303 (PSTY…SMCQ), 315 to 387 (QMAQ…TILQ), and 391 to 462 (NRPA…AIVG). Lys208 is modified (N6-acetyllysine).

Belongs to the annexin family. As to quaternary structure, interacts with PDCD6.

Its function is as follows. Calcium/phospholipid-binding protein which promotes membrane fusion and is involved in exocytosis. This chain is Annexin A7 (Anxa7), found in Mus musculus (Mouse).